The sequence spans 1226 residues: Methionine synthase (1226 aa).

Residues 7–327 (KVQIEKQLSE…EHIRQMALVV (321 aa)) enclose the Hcy-binding domain. Residues C249, C312, and C313 each contribute to the Zn(2+) site. Residues 358–619 (FINVGERTNV…VPEDLREAVE (262 aa)) enclose the Pterin-binding domain. A B12-binding N-terminal domain is found at 652–746 (SALEWRDWPV…FINASKEVGA (95 aa)). Residues E696, 758–762 (GDVHD), H761, S806, T810, and A862 contribute to the methylcob(III)alamin site. The B12-binding domain occupies 748 to 883 (NGKILLATVK…SNELKPSFVE (136 aa)). The 328-residue stretch at 899 to 1226 (KQPRTKPVTL…AEKWLGPNLN (328 aa)) folds into the AdoMet activation domain. S-adenosyl-L-methionine contacts are provided by residues D949, R1137, and 1192–1193 (YF).

Belongs to the vitamin-B12 dependent methionine synthase family. The cofactor is methylcob(III)alamin. Zn(2+) is required as a cofactor.

It carries out the reaction (6S)-5-methyl-5,6,7,8-tetrahydrofolate + L-homocysteine = (6S)-5,6,7,8-tetrahydrofolate + L-methionine. Its pathway is amino-acid biosynthesis; L-methionine biosynthesis via de novo pathway; L-methionine from L-homocysteine (MetH route): step 1/1. In terms of biological role, catalyzes the transfer of a methyl group from methyl-cobalamin to homocysteine, yielding enzyme-bound cob(I)alamin and methionine. Subsequently, remethylates the cofactor using methyltetrahydrofolate. The chain is Methionine synthase (metH) from Aliivibrio fischeri (Vibrio fischeri).